A 397-amino-acid chain; its full sequence is Argininosuccinate synthase (397 aa).

8–16 (AYSGGLDTS) contributes to the ATP binding site. Tyrosine 87 is an L-citrulline binding site. An ATP-binding site is contributed by glycine 117. L-aspartate is bound by residues threonine 119, asparagine 123, and aspartate 124. Asparagine 123 is a binding site for L-citrulline. L-citrulline is bound by residues arginine 127, serine 175, glutamate 259, and tyrosine 271.

The protein belongs to the argininosuccinate synthase family. Type 1 subfamily. In terms of assembly, homotetramer.

The protein resides in the cytoplasm. The enzyme catalyses L-citrulline + L-aspartate + ATP = 2-(N(omega)-L-arginino)succinate + AMP + diphosphate + H(+). The protein operates within amino-acid biosynthesis; L-arginine biosynthesis; L-arginine from L-ornithine and carbamoyl phosphate: step 2/3. This chain is Argininosuccinate synthase, found in Streptomyces griseus subsp. griseus (strain JCM 4626 / CBS 651.72 / NBRC 13350 / KCC S-0626 / ISP 5235).